Consider the following 2839-residue polypeptide: PDZ domain-containing protein 2 (2839 aa).

In terms of domain architecture, PDZ 1 spans L85–K182. The disordered stretch occupies residues S185–F318. A compositionally biased stretch (low complexity) spans G189–T202. Over residues H280 to K296 the composition is skewed to basic and acidic residues. Residues K334–E419 enclose the PDZ 2 domain. Polar residues predominate over residues T437–T447. Residues T437 to L501 are disordered. Acidic residues predominate over residues D448 to G461. Residue S568 is modified to Phosphoserine. The PDZ 3 domain occupies I586 to K672. Residues L678 to T697 are compositionally biased toward polar residues. Positions L678–D723 are disordered. Residues E728–H813 enclose the PDZ 4 domain. Composition is skewed to polar residues over residues Y832–G843 and G894–S908. 2 disordered regions span residues Y832–S852 and D879–L921. Residues S944 and S948 each carry the phosphoserine modification. Disordered regions lie at residues S984–P1033, S1062–L1155, K1216–A1493, F1530–Q1620, P1638–S1712, N1809–K1865, G1892–D1976, P2009–M2079, Q2135–K2166, I2178–H2211, H2232–V2251, A2353–G2383, S2426–K2481, and I2516–A2564. Residues M1012 to R1022 are compositionally biased toward basic and acidic residues. 7 stretches are compositionally biased toward polar residues: residues R1092–S1111, S1138–G1147, L1221–I1236, S1250–A1269, T1305–H1315, S1384–D1401, and R1440–E1453. Low complexity predominate over residues S1662 to S1672. Polar residues predominate over residues E1698–L1711. A Phosphoserine modification is found at S1850. Over residues S1919–V1931 the composition is skewed to polar residues. Residues H1936–R1945 show a composition bias toward basic and acidic residues. Over residues S2139–S2152 the composition is skewed to low complexity. Residues G2370 to G2383 are compositionally biased toward low complexity. Composition is skewed to polar residues over residues S2426 to G2437, R2470 to S2480, and P2546 to D2559. Residues F2622–K2706 form the PDZ 5 domain. Residues D2709 to S2729 form a disordered region. A PDZ 6 domain is found at C2750–H2835.

In terms of assembly, interacts with SCN10A, CTNND2 and PKP4. In terms of processing, a secreted form is produced by caspase-mediated proteolytic cleavage. In terms of tissue distribution, isoform 2 is expressed (at protein level) in prostate and many prostate tumors.

It is found in the nucleus. The protein localises to the cytoplasm. Its subcellular location is the endoplasmic reticulum. The protein resides in the secreted. The sequence is that of PDZ domain-containing protein 2 (PDZD2) from Homo sapiens (Human).